Here is a 57-residue protein sequence, read N- to C-terminus: MAVPKKRTSISKKRIRKNIWKLKGHWAAKKAISLAKSISTGNSKSFFVQQTSNKVLE.

The protein belongs to the bacterial ribosomal protein bL32 family.

It is found in the plastid. It localises to the chloroplast. This is Large ribosomal subunit protein bL32c from Nandina domestica (Heavenly bamboo).